The sequence spans 403 residues: Acetate kinase (403 aa).

Position 8 (asparagine 8) interacts with Mg(2+). Lysine 15 provides a ligand contact to ATP. Residue arginine 90 coordinates substrate. Aspartate 147 serves as the catalytic Proton donor/acceptor. ATP contacts are provided by residues histidine 207–glycine 211, aspartate 282–arginine 284, and glycine 330–asparagine 334. A Mg(2+)-binding site is contributed by glutamate 384.

Belongs to the acetokinase family. As to quaternary structure, homodimer. Requires Mg(2+) as cofactor. Mn(2+) serves as cofactor.

The protein resides in the cytoplasm. It catalyses the reaction acetate + ATP = acetyl phosphate + ADP. It functions in the pathway metabolic intermediate biosynthesis; acetyl-CoA biosynthesis; acetyl-CoA from acetate: step 1/2. Functionally, catalyzes the formation of acetyl phosphate from acetate and ATP. Can also catalyze the reverse reaction. The protein is Acetate kinase of Exiguobacterium sibiricum (strain DSM 17290 / CCUG 55495 / CIP 109462 / JCM 13490 / 255-15).